Here is a 641-residue protein sequence, read N- to C-terminus: SUMO-activating enzyme subunit 2 (641 aa).

Residues 24-29, Asp-48, 56-59, Lys-72, 95-96, and 117-122 each bind ATP; these read GAGGIG, NLNR, SI, and DNNAAR. Positions 158 and 161 each coordinate Zn(2+). The Glycyl thioester intermediate role is filled by Cys-173. Lys-190 participates in a covalent cross-link: Glycyl lysine isopeptide (Lys-Gly) (interchain with G-Cter in SUMO). Lys-236 participates in a covalent cross-link: Glycyl lysine isopeptide (Lys-Gly) (interchain with G-Cter in SUMO1). Residues Lys-257 and Lys-275 each participate in a glycyl lysine isopeptide (Lys-Gly) (interchain with G-Cter in SUMO) cross-link. 2 residues coordinate Zn(2+): Cys-439 and Cys-442. A disordered region spans residues 546–641; sequence GDVPEKGPQK…EEDDDIIALD (96 aa). Polar residues predominate over residues 556–579; the sequence is PSEQSVKNITNGSDDGAQPSTSKA. Positions 582-594 are enriched in acidic residues; sequence QDDVLIVDSDEES. Glycyl lysine isopeptide (Lys-Gly) (interchain with G-Cter in SUMO) cross-links involve residues Lys-610, Lys-612, and Lys-623. Over residues 630–641 the composition is skewed to acidic residues; that stretch reads PVEEDDDIIALD.

This sequence belongs to the ubiquitin-activating E1 family. In terms of assembly, heterodimer of sae1 and uba2/sae2. The heterodimer corresponds to the two domains that are encoded on a single polypeptide chain in ubiquitin-activating enzyme E1. Interacts with ube2i. Sumoylated with SUMO1 and SUMO2/3 and by UBC9. Sumoylation at Lys-236 inhibits enzymatic activity. Sumoylation at the C-terminal lysine cluster plays an essential role in nuclear trafficking.

The protein resides in the cytoplasm. Its subcellular location is the nucleus. It participates in protein modification; protein sumoylation. Functionally, the heterodimer acts as an E1 ligase for sumo1, sumo2, and sumo3. It mediates ATP-dependent activation of sumo proteins followed by formation of a thioester bond between a sumo protein and a conserved active site cysteine residue on uba2/sae2. This is SUMO-activating enzyme subunit 2 (uba2) from Xenopus tropicalis (Western clawed frog).